The chain runs to 191 residues: Elongation factor P (191 aa).

It belongs to the elongation factor P family.

Its subcellular location is the cytoplasm. It functions in the pathway protein biosynthesis; polypeptide chain elongation. Involved in peptide bond synthesis. Stimulates efficient translation and peptide-bond synthesis on native or reconstituted 70S ribosomes in vitro. Probably functions indirectly by altering the affinity of the ribosome for aminoacyl-tRNA, thus increasing their reactivity as acceptors for peptidyl transferase. This Janthinobacterium sp. (strain Marseille) (Minibacterium massiliensis) protein is Elongation factor P.